Consider the following 453-residue polypeptide: F-box/FBD/LRR-repeat protein At4g00160 (453 aa).

One can recognise an F-box domain in the interval 15-68 (KDRISELPDALLIKILSFLPTKIVVATSVFSKQWRPLWKLVPNLEFDSEDYDDK). 6 LRR repeats span residues 89 to 111 (LESFRLEFESEKVDPVDIGLWVG), 165 to 190 (MKSLRTLHLELVSYKDESSIRNLLSG), 215 to 239 (VPSLKRLTINDDHDGQEFWGYVINA), 247 to 270 (IEDLRCPGFCLNAPELMEANIFDG), 282 to 307 (LTSVKRLLLNLSPWKITYPTGSIFYQ), and 331 to 358 (SPKLQVLKLTDNCVKFHKNGLPGGKWNE). The FBD domain occupies 355-406 (KWNEPKYVPECLLSHLETFVWRRFDWGREEEKEIATYILKNARRLNKATFST).

The sequence is that of F-box/FBD/LRR-repeat protein At4g00160 from Arabidopsis thaliana (Mouse-ear cress).